Reading from the N-terminus, the 710-residue chain is Elongation factor G (710 aa).

The region spanning 8–290 is the tr-type G domain; it reads SQYRNIGISA…AIVEYLPSPM (283 aa). Residues 17 to 24, 88 to 92, and 142 to 145 each bind GTP; these read AHIDAGKT, DTPGH, and NKMD.

It belongs to the TRAFAC class translation factor GTPase superfamily. Classic translation factor GTPase family. EF-G/EF-2 subfamily.

It is found in the cytoplasm. Functionally, catalyzes the GTP-dependent ribosomal translocation step during translation elongation. During this step, the ribosome changes from the pre-translocational (PRE) to the post-translocational (POST) state as the newly formed A-site-bound peptidyl-tRNA and P-site-bound deacylated tRNA move to the P and E sites, respectively. Catalyzes the coordinated movement of the two tRNA molecules, the mRNA and conformational changes in the ribosome. The chain is Elongation factor G from Buchnera aphidicola subsp. Baizongia pistaciae (strain Bp).